The following is a 146-amino-acid chain: U-scoloptoxin(16)-Er1a (146 aa).

An N-terminal signal peptide occupies residues 1–26; that stretch reads MNTVSVVQFLAVGCAVFVLYGRGVFA.

It belongs to the scoloptoxin-16 family. In terms of processing, contains 4 disulfide bonds. As to expression, expressed by the venom gland.

Its subcellular location is the secreted. The polypeptide is U-scoloptoxin(16)-Er1a (Ethmostigmus rubripes (Giant centipede)).